Reading from the N-terminus, the 197-residue chain is Guanylyl cyclase-activating protein 2 (197 aa).

The N-myristoyl glycine moiety is linked to residue glycine 2. EF-hand domains are found at residues 15–50 (DVAE…QDNQ), 51–86 (EAAD…VLRG), 87–122 (KLEH…IYNL), and 138–173 (SPEQ…DKWV). Positions 64, 66, 68, 70, 75, 100, 102, 104, 106, 111, 151, 153, 155, 157, and 162 each coordinate Ca(2+).

As to expression, low expression in retina.

Its function is as follows. Stimulates guanylyl cyclase 1 (GC1) and GC2 when free calcium ions concentration is low and inhibits guanylyl cyclases when free calcium ions concentration is elevated. This Ca(2+)-sensitive regulation of guanylyl cyclase (GC) is a key event in recovery of the dark state of rod photoreceptors following light exposure. This chain is Guanylyl cyclase-activating protein 2 (GUCA1B), found in Lithobates pipiens (Northern leopard frog).